Reading from the N-terminus, the 348-residue chain is Flagellar P-ring protein (348 aa).

The first 16 residues, 1 to 16, serve as a signal peptide directing secretion; it reads MRVLTIFLLFMTSIFA.

Belongs to the FlgI family. In terms of assembly, the basal body constitutes a major portion of the flagellar organelle and consists of four rings (L,P,S, and M) mounted on a central rod.

The protein localises to the periplasm. It is found in the bacterial flagellum basal body. Its function is as follows. Assembles around the rod to form the L-ring and probably protects the motor/basal body from shearing forces during rotation. The sequence is that of Flagellar P-ring protein from Campylobacter jejuni subsp. jejuni serotype O:23/36 (strain 81-176).